The following is a 325-amino-acid chain: Tagatose 1,6-diphosphate aldolase 1 (325 aa).

This sequence belongs to the aldolase LacD family.

The enzyme catalyses D-tagatofuranose 1,6-bisphosphate = D-glyceraldehyde 3-phosphate + dihydroxyacetone phosphate. It functions in the pathway carbohydrate metabolism; D-tagatose 6-phosphate degradation; D-glyceraldehyde 3-phosphate and glycerone phosphate from D-tagatose 6-phosphate: step 2/2. The protein is Tagatose 1,6-diphosphate aldolase 1 of Streptococcus agalactiae serotype III (strain NEM316).